A 201-amino-acid polypeptide reads, in one-letter code: Peptidyl-tRNA hydrolase (201 aa).

Y14 is a tRNA binding site. H19 serves as the catalytic Proton acceptor. Positions 64, 66, and 112 each coordinate tRNA.

The protein belongs to the PTH family. As to quaternary structure, monomer.

It is found in the cytoplasm. It carries out the reaction an N-acyl-L-alpha-aminoacyl-tRNA + H2O = an N-acyl-L-amino acid + a tRNA + H(+). Functionally, hydrolyzes ribosome-free peptidyl-tRNAs (with 1 or more amino acids incorporated), which drop off the ribosome during protein synthesis, or as a result of ribosome stalling. Catalyzes the release of premature peptidyl moieties from peptidyl-tRNA molecules trapped in stalled 50S ribosomal subunits, and thus maintains levels of free tRNAs and 50S ribosomes. This Bradyrhizobium sp. (strain ORS 278) protein is Peptidyl-tRNA hydrolase.